Consider the following 391-residue polypeptide: MAKLNAYFGEYGGQYVPQILVPALDQLEQAFIDAQEDPDFRAEFMSLLQEYAGRPTALTLTRNLTKGTKTKLYLKREDLLHGGAHKTNEVLGQGLVGKRMGKSAIIAETGAGQHGVGSALASALVGLKCRIIMGAKNLERQSPNVFRMKLMAESIPSSVTLKVAVNEALRDWSATETTHYYLGTAAGPHPYPTIVREFQRIIGEETKLQILAREGRLPDAVLACIGGGSNAIGMFADFIDEANVRLIGIEPAGKGIDTHQHGAPLKHGKTGIFFGMKAPLMQDSYGQVEESYSVSAGLDFPSVGPQHAHLNAIGRANYESITDDEALEAFQSIARNEGIIAALESSHALAYAIKMARIDPDKEQLLVVNLSGRGDKDIFTVHQLLEERGAL.

Position 86 is an N6-(pyridoxal phosphate)lysine (lysine 86).

Belongs to the TrpB family. As to quaternary structure, tetramer of two alpha and two beta chains. The cofactor is pyridoxal 5'-phosphate.

The catalysed reaction is (1S,2R)-1-C-(indol-3-yl)glycerol 3-phosphate + L-serine = D-glyceraldehyde 3-phosphate + L-tryptophan + H2O. It participates in amino-acid biosynthesis; L-tryptophan biosynthesis; L-tryptophan from chorismate: step 5/5. Its function is as follows. The beta subunit is responsible for the synthesis of L-tryptophan from indole and L-serine. This chain is Tryptophan synthase beta chain, found in Vibrio metschnikovii.